The following is a 172-amino-acid chain: Large ribosomal subunit protein uL10 (172 aa).

The protein belongs to the universal ribosomal protein uL10 family. As to quaternary structure, part of the ribosomal stalk of the 50S ribosomal subunit. The N-terminus interacts with L11 and the large rRNA to form the base of the stalk. The C-terminus forms an elongated spine to which L12 dimers bind in a sequential fashion forming a multimeric L10(L12)X complex.

Its function is as follows. Forms part of the ribosomal stalk, playing a central role in the interaction of the ribosome with GTP-bound translation factors. The chain is Large ribosomal subunit protein uL10 from Nitrobacter winogradskyi (strain ATCC 25391 / DSM 10237 / CIP 104748 / NCIMB 11846 / Nb-255).